We begin with the raw amino-acid sequence, 93 residues long: Integration host factor subunit beta (93 aa).

Belongs to the bacterial histone-like protein family. In terms of assembly, heterodimer of an alpha and a beta chain.

In terms of biological role, this protein is one of the two subunits of integration host factor, a specific DNA-binding protein that functions in genetic recombination as well as in transcriptional and translational control. This is Integration host factor subunit beta from Aliivibrio fischeri (strain ATCC 700601 / ES114) (Vibrio fischeri).